The chain runs to 304 residues: 33 kDa chaperonin (304 aa).

2 disulfides stabilise this stretch: Cys-245-Cys-247 and Cys-278-Cys-281.

Belongs to the HSP33 family. Under oxidizing conditions two disulfide bonds are formed involving the reactive cysteines. Under reducing conditions zinc is bound to the reactive cysteines and the protein is inactive.

The protein resides in the cytoplasm. Functionally, redox regulated molecular chaperone. Protects both thermally unfolding and oxidatively damaged proteins from irreversible aggregation. Plays an important role in the bacterial defense system toward oxidative stress. This Microcystis aeruginosa (strain NIES-843 / IAM M-2473) protein is 33 kDa chaperonin.